We begin with the raw amino-acid sequence, 270 residues long: A-type potassium channel modulatory protein KCNIP2 (270 aa).

A compositionally biased stretch (basic and acidic residues) spans 1–17 (MRGQGRKESLSESRDLD). The segment at 1 to 34 (MRGQGRKESLSESRDLDGSYDQLTGHPPGPSKKA) is disordered. S9 bears the Phosphoserine mark. Residues C45 and C46 are each lipidated (S-palmitoyl cysteine). In terms of domain architecture, EF-hand 1; degenerate spans 81-137 (FELSTVCHRPEGLEQLQEQTKFTRRELQVLYRGFKNECPSGIVNEENFKQIYSQFFP). 3 consecutive EF-hand domains span residues 140–175 (DSSN…ILRG), 176–211 (TIDD…IYDM), and 224–259 (APRE…DENI). 14 residues coordinate Ca(2+): D153, N155, D157, S159, D164, D189, N191, D193, C195, E200, D237, N239, D241, and E248. Residues 257–270 (ENIMRSMQLFDNVI) are interaction with KCND2.

This sequence belongs to the recoverin family. In terms of assembly, component of heteromultimeric potassium channels. Identified in potassium channel complexes containing KCND1, KCND2, KCND3, KCNIP1, KCNIP2, KCNIP3, KCNIP4, DPP6 and DPP10. The KCND2-KCNIP2 channel complex contains four KCND2 and four KCNIP2 subunits. Interacts with KCND2. Probably part of a complex consisting of KCNIP1, KCNIP2 isoform 3 and KCND2. At least isoform 2 and isoform 3 can self-associate to form homodimers and homotetramers. Isoform 3 interacts with KCNIP1 in a calcium-dependent manner. Interacts with KCND3; each KCNIP2 monomer interacts with two adjacent KCND3 subunits, through both the N-terminal inactivation ball of a KCND3 subunit and a C-terminal helix from the adjacent KCND3 subunit, clamping them together; this interaction modulates the channel gating kinetics. In terms of processing, palmitoylated. Palmitoylation enhances association with the plasma membrane. Expressed in heart, brain and lung. In brain, abundantly expressed in striatum, hippocampus and olfactory bulb, moderately expressed in cerebral cortex and lowly expressed in thalamus and hypothalamus. Isoform 1 is predominant in cerebral cortex, striatum and hippocampus. Isoform 1, isoform 2 and isoform 3 are equally expressed in olfactory bulb. Iisoform 3 is expressed at high levels and isoform 1 at low levels in heart (in PubMed:11263977).

It localises to the cell membrane. Its function is as follows. Regulatory subunit of Kv4/D (Shal)-type voltage-gated rapidly inactivating A-type potassium channels. Modulates channel density, inactivation kinetics and rate of recovery from inactivation in a calcium-dependent and isoform-specific manner. Involved in KCND2 and KCND3 trafficking to the cell surface. Essential for the expression of I(To) currents in the heart. Required for normal protein levels of KCND2 in the heart ventricle. In Rattus norvegicus (Rat), this protein is A-type potassium channel modulatory protein KCNIP2.